Reading from the N-terminus, the 435-residue chain is Serine--tRNA ligase (435 aa).

234–236 (TAE) is an L-serine binding site. 265 to 267 (RRE) lines the ATP pocket. E288 is a binding site for L-serine. An ATP-binding site is contributed by 352 to 355 (EISS). S388 serves as a coordination point for L-serine.

Belongs to the class-II aminoacyl-tRNA synthetase family. Type-1 seryl-tRNA synthetase subfamily. Homodimer. The tRNA molecule binds across the dimer.

The protein resides in the cytoplasm. The enzyme catalyses tRNA(Ser) + L-serine + ATP = L-seryl-tRNA(Ser) + AMP + diphosphate + H(+). It carries out the reaction tRNA(Sec) + L-serine + ATP = L-seryl-tRNA(Sec) + AMP + diphosphate + H(+). It participates in aminoacyl-tRNA biosynthesis; selenocysteinyl-tRNA(Sec) biosynthesis; L-seryl-tRNA(Sec) from L-serine and tRNA(Sec): step 1/1. Catalyzes the attachment of serine to tRNA(Ser). Is also able to aminoacylate tRNA(Sec) with serine, to form the misacylated tRNA L-seryl-tRNA(Sec), which will be further converted into selenocysteinyl-tRNA(Sec). The protein is Serine--tRNA ligase of Synechococcus sp. (strain JA-3-3Ab) (Cyanobacteria bacterium Yellowstone A-Prime).